The following is a 24-amino-acid chain: Transaldolase (24 aa).

This sequence belongs to the transaldolase family.

The protein localises to the cytoplasm. The catalysed reaction is D-sedoheptulose 7-phosphate + D-glyceraldehyde 3-phosphate = D-erythrose 4-phosphate + beta-D-fructose 6-phosphate. It functions in the pathway carbohydrate degradation; pentose phosphate pathway; D-glyceraldehyde 3-phosphate and beta-D-fructose 6-phosphate from D-ribose 5-phosphate and D-xylulose 5-phosphate (non-oxidative stage): step 2/3. Its function is as follows. Transaldolase is important for the balance of metabolites in the pentose-phosphate pathway. The chain is Transaldolase from Capsicum annuum var. annuum (Red pepper).